We begin with the raw amino-acid sequence, 336 residues long: Fructose-1,6-bisphosphatase class 1 (336 aa).

The Mg(2+) site is built by Glu-90, Asp-112, Leu-114, and Asp-115. Residues Asp-115–Ser-118, Asn-211, and Lys-277 contribute to the substrate site. Residue Glu-283 participates in Mg(2+) binding.

The protein belongs to the FBPase class 1 family. As to quaternary structure, homotetramer. Mg(2+) serves as cofactor.

Its subcellular location is the cytoplasm. The catalysed reaction is beta-D-fructose 1,6-bisphosphate + H2O = beta-D-fructose 6-phosphate + phosphate. Its pathway is carbohydrate biosynthesis; gluconeogenesis. The chain is Fructose-1,6-bisphosphatase class 1 from Pseudomonas aeruginosa (strain UCBPP-PA14).